Consider the following 242-residue polypeptide: tRNA1(Val) (adenine(37)-N6)-methyltransferase (242 aa).

It belongs to the methyltransferase superfamily. tRNA (adenine-N(6)-)-methyltransferase family.

The protein localises to the cytoplasm. It carries out the reaction adenosine(37) in tRNA1(Val) + S-adenosyl-L-methionine = N(6)-methyladenosine(37) in tRNA1(Val) + S-adenosyl-L-homocysteine + H(+). In terms of biological role, specifically methylates the adenine in position 37 of tRNA(1)(Val) (anticodon cmo5UAC). The polypeptide is tRNA1(Val) (adenine(37)-N6)-methyltransferase (Mannheimia succiniciproducens (strain KCTC 0769BP / MBEL55E)).